The chain runs to 534 residues: UDP-glucuronosyltransferase 2A3 (534 aa).

A signal peptide spans 1-18 (MVSEKCVAAFFLLQLCWA). Over 19–493 (GCGFCSKVLV…SWFQYHSLDV (475 aa)) the chain is Extracellular. N102 carries N-linked (GlcNAc...) asparagine glycosylation. At K135 the chain carries N6-succinyllysine. N204 is a glycosylation site (N-linked (GlcNAc...) asparagine). A helical transmembrane segment spans residues 494–514 (IGFLLLCVVTLTFIITKFCLF). The Cytoplasmic portion of the chain corresponds to 515 to 534 (VCQKLYMKESKKMGNRKKKN).

It belongs to the UDP-glycosyltransferase family. Highly expressed in liver, with lower levels in duodenum and jejunum.

It localises to the membrane. It carries out the reaction glucuronate acceptor + UDP-alpha-D-glucuronate = acceptor beta-D-glucuronoside + UDP + H(+). Functionally, UDP-glucuronosyltransferases catalyze phase II biotransformation reactions in which lipophilic substrates are conjugated with glucuronic acid to increase water solubility and enhance excretion. They are of major importance in the conjugation and subsequent elimination of potentially toxic xenobiotics and endogenous compounds. This chain is UDP-glucuronosyltransferase 2A3 (Ugt2a3), found in Mus musculus (Mouse).